Reading from the N-terminus, the 369-residue chain is GTPase Obg (369 aa).

Positions 1-159 (MKFIDEARIE…RMLKLELKVL (159 aa)) constitute an Obg domain. Residues 128-147 (LHFKSSTNRAPRQKTDGKPG) form a disordered region. One can recognise an OBG-type G domain in the interval 160-334 (ADVGLLGMPN…LCYAIYDYLA (175 aa)). GTP is bound by residues 166 to 173 (GMPNAGKS), 191 to 195 (FTTLA), 213 to 216 (DIPG), 284 to 287 (NKLD), and 315 to 317 (SAL). Residues serine 173 and threonine 193 each coordinate Mg(2+).

The protein belongs to the TRAFAC class OBG-HflX-like GTPase superfamily. OBG GTPase family. As to quaternary structure, monomer. It depends on Mg(2+) as a cofactor.

It is found in the cytoplasm. Functionally, an essential GTPase which binds GTP, GDP and possibly (p)ppGpp with moderate affinity, with high nucleotide exchange rates and a fairly low GTP hydrolysis rate. Plays a role in control of the cell cycle, stress response, ribosome biogenesis and in those bacteria that undergo differentiation, in morphogenesis control. This chain is GTPase Obg, found in Burkholderia multivorans (strain ATCC 17616 / 249).